Here is a 348-residue protein sequence, read N- to C-terminus: MDENKQKALAAALGQIEKQFGKGSIMRLGDNRAMDVETISTGSLSLDIALGAGGLPMGRIVEVYGPESSGKTTLTLELIAAAQREGKTCAFIDAEHALDPVYAKKLGVDIDALLVSQPDTGEQALEICDALARSGAIDVMVVDSVAALTPKAEIEGEMGDSHMGLQARMLSQAMRKLTGNLKQSNCMCIFIKQIRMKIGVMFGNPETTTGGNALKFYASVRLDIRRTGAIKEGDEVVGNETRIKVVKNKIAAPFKEANTQIMYGQGFNREGELVDLGVKHKLVEKAGAWYSYNGDKIGQGKANACNYLREHTEVAQTIDKKLREMLLSPAVAEGPEAGEMPEKKEEEF.

Residue 65–72 participates in ATP binding; that stretch reads GPESSGKT.

It belongs to the RecA family.

It is found in the cytoplasm. Its function is as follows. Can catalyze the hydrolysis of ATP in the presence of single-stranded DNA, the ATP-dependent uptake of single-stranded DNA by duplex DNA, and the ATP-dependent hybridization of homologous single-stranded DNAs. It interacts with LexA causing its activation and leading to its autocatalytic cleavage. This chain is Protein RecA, found in Vibrio natriegens.